Here is a 131-residue protein sequence, read N- to C-terminus: Heat shock protein 15 homolog (131 aa).

The 62-residue stretch at 6-67 folds into the S4 RNA-binding domain; the sequence is VRLDKWLWAA…NEEKEIKIIA (62 aa). The tract at residues 98–131 is disordered; that stretch reads ARKNNSLSMPHPDRRPNKKERRDLLKFKHQDKFE. Residues 108-131 show a composition bias toward basic and acidic residues; that stretch reads HPDRRPNKKERRDLLKFKHQDKFE.

The protein belongs to the HSP15 family.

Functionally, involved in the recycling of free 50S ribosomal subunits that still carry a nascent chain. Binds RNA more specifically than DNA. Binds with very high affinity to the free 50S ribosomal subunit. Does not bind it when it is part of the 70S ribosome. The sequence is that of Heat shock protein 15 homolog (hslR) from Haemophilus influenzae (strain ATCC 51907 / DSM 11121 / KW20 / Rd).